The primary structure comprises 118 residues: MPRVKGGTVTRQRRKRVLKLAKGYYGSKRTLFKTAKQQVIKSGQYAYRDRRQKKRDFRKLWITRINAAARMHDLSYSKLMHGLKVAGIDINRKMLSDLAISDEKAFAQLVSQAKEALK.

This sequence belongs to the bacterial ribosomal protein bL20 family.

Binds directly to 23S ribosomal RNA and is necessary for the in vitro assembly process of the 50S ribosomal subunit. It is not involved in the protein synthesizing functions of that subunit. The polypeptide is Large ribosomal subunit protein bL20 (Oceanobacillus iheyensis (strain DSM 14371 / CIP 107618 / JCM 11309 / KCTC 3954 / HTE831)).